The sequence spans 59 residues: MNFTKIFVLIAMAALLLVGQSEAGGLKKLGKKLEGAGKRVFNAAEKALPVVAGAKALGK.

The signal sequence occupies residues 1–23 (MNFTKIFVLIAMAALLLVGQSEA).

The protein resides in the secreted. Cecropins have lytic and antibacterial activity against several Gram-positive and Gram-negative bacteria. The protein is Cecropin-C type 1 (CECC1) of Aedes albopictus (Asian tiger mosquito).